The sequence spans 811 residues: N-terminal acetyltransferase B complex subunit arm1 (811 aa).

It belongs to the MDM20/NAA25 family. Component of the N-terminal acetyltransferase B (NatB) complex.

It localises to the cytoplasm. In terms of biological role, non-catalytic subunit of the NatB N-terminal acetyltransferase, which catalyzes acetylation of the amino-terminal methionine residues of all proteins beginning with Met-Asp or Met-Glu and of some proteins beginning with Met-Asn or Met-Met. This chain is N-terminal acetyltransferase B complex subunit arm1 (arm1), found in Schizosaccharomyces pombe (strain 972 / ATCC 24843) (Fission yeast).